The primary structure comprises 1026 residues: Multidrug resistance protein MdtC (1026 aa).

11 helical membrane-spanning segments follow: residues 15–35, 333–353, 360–380, 387–407, 431–451, 463–483, 528–548, 853–873, 897–917, 953–973, and 984–1004; these read ILIA…LPVA, EVEE…FLFL, LIPA…MYLC, LSLM…IVVL, VGFT…PLLL, FAVT…TLTP, LVGV…IAIP, LILI…LYES, LFNA…IGIV, PIMM…LSGG, and ITIV…TPVV.

This sequence belongs to the resistance-nodulation-cell division (RND) (TC 2.A.6) family. MdtC subfamily. As to quaternary structure, part of a tripartite efflux system composed of MdtA, MdtB and MdtC. MdtC forms a heteromultimer with MdtB.

The protein resides in the cell inner membrane. The sequence is that of Multidrug resistance protein MdtC from Salmonella newport (strain SL254).